We begin with the raw amino-acid sequence, 405 residues long: Phosphoglycerate kinase (405 aa).

Substrate is bound by residues 21 to 23 (DFN), Arg38, 59 to 62 (HQSR), Arg116, and Arg156. ATP-binding positions include Glu330 and 355–358 (GGHT).

Belongs to the phosphoglycerate kinase family. In terms of assembly, monomer.

It localises to the cytoplasm. It carries out the reaction (2R)-3-phosphoglycerate + ATP = (2R)-3-phospho-glyceroyl phosphate + ADP. Its pathway is carbohydrate degradation; glycolysis; pyruvate from D-glyceraldehyde 3-phosphate: step 2/5. The sequence is that of Phosphoglycerate kinase from Methanocorpusculum labreanum (strain ATCC 43576 / DSM 4855 / Z).